The sequence spans 651 residues: Translation initiation factor eIF2B subunit delta (651 aa).

The segment at 1 to 108 (MSESEAKSRS…NERNVKKSTL (108 aa)) is disordered. S2 bears the N-acetylserine mark. The segment covering 11-28 (ATPPSKAKQATPTTTAAA) has biased composition (low complexity). Composition is skewed to basic and acidic residues over residues 30–49 (GEKKLTNKELKELKKQEKAA) and 76–90 (KQLQREQQQKREQKQ). S106 bears the Phosphoserine mark. At T121 the chain carries Phosphothreonine. The tract at residues 566 to 600 (AMENKPKGNKIGGKKGSEGESKDASNEEDSNSKNI) is disordered. The segment covering 580–590 (KGSEGESKDAS) has biased composition (basic and acidic residues).

This sequence belongs to the eIF-2B alpha/beta/delta subunits family. As to quaternary structure, component of the translation initiation factor 2B (eIF2B) complex which is a heterodecamer of two sets of five different subunits: alpha, beta, gamma, delta and epsilon. Subunits alpha, beta and delta comprise a regulatory subcomplex and subunits epsilon and gamma comprise a catalytic subcomplex. Within the complex, the hexameric regulatory complex resides at the center, with the two heterodimeric catalytic subcomplexes bound on opposite sides.

Its subcellular location is the cytoplasm. The protein localises to the cytosol. Functionally, acts as a component of the translation initiation factor 2B (eIF2B) complex, which catalyzes the exchange of GDP for GTP on the eukaryotic initiation factor 2 (eIF2) complex gamma subunit. Its guanine nucleotide exchange factor activity is repressed when bound to eIF2 complex phosphorylated on the alpha subunit, thereby limiting the amount of methionyl-initiator methionine tRNA available to the ribosome and consequently global translation is repressed. It activates the synthesis of GCN4 in yeast under amino acid starvation conditions by suppressing the inhibitory effects of multiple AUG codons present in the leader of GCN4 mRNA. It may promote either repression or activation of GCN4 expression depending on amino acid availability. GCD2 is also required for cell viability. Its function can partially be replaced by GCN3 under normal growth conditions in GCD2-defective mutants, under AA starvation conditions GCN3 is an antagonist (GCN4 translational activator). The chain is Translation initiation factor eIF2B subunit delta (GCD2) from Saccharomyces cerevisiae (strain ATCC 204508 / S288c) (Baker's yeast).